Reading from the N-terminus, the 487-residue chain is ATP synthase subunit beta (487 aa).

Residue glycine 164–threonine 171 coordinates ATP.

This sequence belongs to the ATPase alpha/beta chains family. In terms of assembly, F-type ATPases have 2 components, CF(1) - the catalytic core - and CF(0) - the membrane proton channel. CF(1) has five subunits: alpha(3), beta(3), gamma(1), delta(1), epsilon(1). CF(0) has four main subunits: a(1), b(1), b'(1) and c(9-12).

It localises to the cellular thylakoid membrane. The enzyme catalyses ATP + H2O + 4 H(+)(in) = ADP + phosphate + 5 H(+)(out). Produces ATP from ADP in the presence of a proton gradient across the membrane. The catalytic sites are hosted primarily by the beta subunits. This is ATP synthase subunit beta from Synechococcus sp. (strain WH7803).